The sequence spans 554 residues: uncharacterized protein (554 aa).

Ca(2+)-binding residues include aspartate 327 and asparagine 328.

Belongs to the sulfatase family. Ca(2+) serves as cofactor.

The protein localises to the cytoplasm. It is found in the nucleus. This is an uncharacterized protein from Schizosaccharomyces pombe (strain 972 / ATCC 24843) (Fission yeast).